We begin with the raw amino-acid sequence, 821 residues long: MDKMAYKFIKWFEELRKDDVPLVGGKGANLGEMTNAGIPVPPGFCVTAEAYKYFVENVKVSKEDVKKILGEKANKGTIAEVLASAPDEPRTLQEWIMDIINRTNVDDSKQLQENTAIIRELIESLEMPNEIADEIKQAYKELSQRFGKDEIYVAVRSSATAEDLPEASFAGQQETYLDVLGADDVIDKVKKCWASLWTARATFYRAKQGFDHSKVYLSAVVQKMVNSEKSGVMFTANPVTNNRNEIMINASWGLGEAVVSGAVTPDEYIVEKGTWKIKEKVIAKKEVMVIRNPETGKGTVQVKVAEYLGPEWVEKQVLTDEQIIEVAKMGQKIEEHYGWPQDIEWAYDKDDGKLYIVQSRPITTLKETTTEEVEEVEEAEVILKGLGASPGIGAGRVVVIFDASEIDKVKEGDVLVTTMTNPDMVPAMKRASAIITDEGGRTSHAAIVSRELGIPAVVGTKEATKKLKTGDYVTVDGTRGLVYKGIVKSLVEKKKKEEAAAAPGAAVAAAPLVTGTLVKVNVSMPEVAERAAATGADGVGLLRAEHMILSIGQHPVKFIKEGKEDELVERLAEGIEKVAAAFYPRPVWYRTLDAPTNEFREMPGGEDEPEERNPMLGWRGIRRGLDQPELLRAEFKAIKKVVEKGYNNIGVMLPLVSHPEQIRKAKEIAREVGLEPHKDVAWGIMIEVPAAAIIIEDLIKEGIDFVSFGTNDLTQYTLAIDRDNERVAKLYDETHPAVLKLIKHVIKVCKKYGVETSICGQAGSDPKMARILVRLGIDSISANPDAVQLIRQVVAQEERKLMLEAARKKLLEEEEEEEDLF.

The active-site Tele-phosphohistidine intermediate is His-444. The substrate site is built by Arg-543, Arg-590, Glu-687, Gly-709, Thr-710, Asn-711, and Asp-712. A Mg(2+)-binding site is contributed by Glu-687. Asp-712 serves as a coordination point for Mg(2+). Cys-759 acts as the Proton donor in catalysis.

Belongs to the PEP-utilizing enzyme family. The cofactor is Mg(2+).

The catalysed reaction is pyruvate + ATP + H2O = phosphoenolpyruvate + AMP + phosphate + 2 H(+). It participates in carbohydrate biosynthesis; gluconeogenesis. In terms of biological role, catalyzes the phosphorylation of pyruvate to phosphoenolpyruvate. The sequence is that of Probable phosphoenolpyruvate synthase (ppsA) from Pyrococcus horikoshii (strain ATCC 700860 / DSM 12428 / JCM 9974 / NBRC 100139 / OT-3).